Reading from the N-terminus, the 585-residue chain is Glutamate decarboxylase 2 (585 aa).

A disordered region spans residues 1 to 25 (MASPGSGFWSFGSEDGSGDPENPST). Residues Ser-3, Ser-6, Ser-10, and Ser-13 each carry the phosphoserine modification. S-palmitoyl cysteine attachment occurs at residues Cys-30 and Cys-45. Residue 181 to 183 (QLS) coordinates substrate. Lys-396 is subject to N6-(pyridoxal phosphate)lysine. Residue Arg-558 coordinates substrate.

This sequence belongs to the group II decarboxylase family. As to quaternary structure, homodimer. The cofactor is pyridoxal 5'-phosphate. Post-translationally, phosphorylated; which does not affect kinetic parameters or subcellular location. In terms of processing, palmitoylated; which is required for presynaptic clustering.

The protein localises to the cytoplasm. It localises to the cytosol. The protein resides in the cytoplasmic vesicle. It is found in the presynaptic cell membrane. Its subcellular location is the golgi apparatus membrane. It carries out the reaction L-glutamate + H(+) = 4-aminobutanoate + CO2. Catalyzes the production of GABA. The polypeptide is Glutamate decarboxylase 2 (GAD2) (Canis lupus familiaris (Dog)).